A 255-amino-acid polypeptide reads, in one-letter code: Proteasome subunit alpha (255 aa).

A compositionally biased stretch (polar residues) spans 190–201; sequence PSTSGASGNGET. The tract at residues 190–255 is disordered; the sequence is PSTSGASGNG…DKSSGDGEQN (66 aa). Residues 202-217 show a composition bias toward basic and acidic residues; it reads EPSKLEVAILDRERPG.

It belongs to the peptidase T1A family. The 20S proteasome core is composed of 14 alpha and 14 beta subunits that assemble into four stacked heptameric rings, resulting in a barrel-shaped structure. The two inner rings, each composed of seven catalytic beta subunits, are sandwiched by two outer rings, each composed of seven alpha subunits. The catalytic chamber with the active sites is on the inside of the barrel. Has a gated structure, the ends of the cylinder being occluded by the N-termini of the alpha-subunits. Is capped by the proteasome-associated ATPase, ARC.

It is found in the cytoplasm. The protein operates within protein degradation; proteasomal Pup-dependent pathway. Its activity is regulated as follows. The formation of the proteasomal ATPase ARC-20S proteasome complex, likely via the docking of the C-termini of ARC into the intersubunit pockets in the alpha-rings, may trigger opening of the gate for substrate entry. Interconversion between the open-gate and close-gate conformations leads to a dynamic regulation of the 20S proteasome proteolysis activity. Component of the proteasome core, a large protease complex with broad specificity involved in protein degradation. This is Proteasome subunit alpha from Saccharomonospora viridis (strain ATCC 15386 / DSM 43017 / JCM 3036 / CCUG 5913 / NBRC 12207 / NCIMB 9602 / P101) (Thermoactinomyces viridis).